The primary structure comprises 158 residues: Cytochrome b6-f complex subunit 4 (158 aa).

The next 3 helical transmembrane spans lie at 34–54, 93–113, and 129–149; these read LLYI…GLAV, LLGV…PFLE, and TVFL…TLPI.

Belongs to the cytochrome b family. PetD subfamily. As to quaternary structure, the 4 large subunits of the cytochrome b6-f complex are cytochrome b6, subunit IV (17 kDa polypeptide, petD), cytochrome f and the Rieske protein, while the 4 small subunits are petG, petL, petM and petN. The complex functions as a dimer.

Its subcellular location is the plastid. It is found in the chloroplast thylakoid membrane. Its function is as follows. Component of the cytochrome b6-f complex, which mediates electron transfer between photosystem II (PSII) and photosystem I (PSI), cyclic electron flow around PSI, and state transitions. The protein is Cytochrome b6-f complex subunit 4 of Liriodendron tulipifera (Tuliptree).